Reading from the N-terminus, the 662-residue chain is MERFLLKANYTPKGDQPKAIKELTEGIEKGLKMQTLLGVTGSGKTFTMANVIANVNKPTLVIAPNKTLAAQLCAEFREFFPENAVEYFVSYYDYYQPEAYLPATDTYIEKDSAINDEIDKLRHSATAALFERRDVIIVASVSCIYGLGDPQEYRELLLSVRKGQIYEREAILRKLVDIQYERNEYDLTRGKFRVRGDVIEVFPASYTDRAVRIELFGDEVDRILEFDTLTGEIIGELKHVAIFPASHFATSKEKLERAIKSIEEELEERLRYFEERGKLLEAQRLKQRTLYDIEMLREVGYTKGIENYSRHLTGRKPGEPPYTLIDYFPKDFLMIIDESHITIPQIRGMYEGDRSRKEALVEYGFRLPSAFDNRPLKFHEFEARINQVVFVSATPGPYELKHSQKIVEQIIRPTGLVDPEVEVRPTRGQVDDLYGEIKERVARNERVLVTTLTKKMAEDLTEYFREMGVKVRYLHSDIDTLERVEILRDLRLGVFDVLVGINLLREGLDLPEVSLVAILDADKEGYLRSERSLIQTIGRAARNVNGKVIMYADTVTASMQKAIDETNRRRKLQMEYNRKHGITPQTVQKAVRDVIEATRAVTAELPEVKRDFIQKMSAKEFKQYVEKLTREMKEAAKALEFEKAAMLRDLIIELRAQKAVKK.

Positions 25–412 constitute a Helicase ATP-binding domain; that stretch reads EGIEKGLKMQ…SQKIVEQIIR (388 aa). Position 38-45 (38-45) interacts with ATP; it reads GVTGSGKT. The Beta-hairpin signature appears at 91–114; sequence YYDYYQPEAYLPATDTYIEKDSAI. In terms of domain architecture, Helicase C-terminal spans 429 to 595; that stretch reads QVDDLYGEIK…TVQKAVRDVI (167 aa). Positions 622 to 657 constitute a UVR domain; it reads KQYVEKLTREMKEAAKALEFEKAAMLRDLIIELRAQ.

It belongs to the UvrB family. In terms of assembly, forms a heterotetramer with UvrA during the search for lesions. Interacts with UvrC in an incision complex.

Its subcellular location is the cytoplasm. Functionally, the UvrABC repair system catalyzes the recognition and processing of DNA lesions. A damage recognition complex composed of 2 UvrA and 2 UvrB subunits scans DNA for abnormalities. Upon binding of the UvrA(2)B(2) complex to a putative damaged site, the DNA wraps around one UvrB monomer. DNA wrap is dependent on ATP binding by UvrB and probably causes local melting of the DNA helix, facilitating insertion of UvrB beta-hairpin between the DNA strands. Then UvrB probes one DNA strand for the presence of a lesion. If a lesion is found the UvrA subunits dissociate and the UvrB-DNA preincision complex is formed. This complex is subsequently bound by UvrC and the second UvrB is released. If no lesion is found, the DNA wraps around the other UvrB subunit that will check the other stand for damage. The polypeptide is UvrABC system protein B (Carboxydothermus hydrogenoformans (strain ATCC BAA-161 / DSM 6008 / Z-2901)).